We begin with the raw amino-acid sequence, 512 residues long: Ribose import ATP-binding protein RbsA 1 (512 aa).

2 consecutive ABC transporter domains span residues 8 to 244 and 257 to 502; these read FRME…IGRE and PEEK…LNIG. 40 to 47 provides a ligand contact to ATP; it reads GENGAGKS.

It belongs to the ABC transporter superfamily. Ribose importer (TC 3.A.1.2.1) family. In terms of assembly, the complex is composed of an ATP-binding protein (RbsA), two transmembrane proteins (RbsC) and a solute-binding protein (RbsB).

The protein resides in the cell inner membrane. It carries out the reaction D-ribose(out) + ATP + H2O = D-ribose(in) + ADP + phosphate + H(+). Functionally, part of the ABC transporter complex RbsABC involved in ribose import. Responsible for energy coupling to the transport system. The protein is Ribose import ATP-binding protein RbsA 1 of Rhizobium etli (strain ATCC 51251 / DSM 11541 / JCM 21823 / NBRC 15573 / CFN 42).